We begin with the raw amino-acid sequence, 66 residues long: Venom peptide CtAPI (66 aa).

Intrachain disulfides connect cysteine 7–cysteine 44, cysteine 16–cysteine 40, cysteine 20–cysteine 33, cysteine 24–cysteine 64, and cysteine 46–cysteine 58. Residues 7–64 form the TIL domain; it reads CEKDEEFVNCAPRCPQNCRNIRSYQPCLVLTPVCAPGCVCRSGKVKNDRGDCVSITDC.

The protein belongs to the serine protease inhibitor-like (TIL domain-containing) family. As to expression, expressed by the venom gland.

It is found in the secreted. Its function is as follows. Serine protease inhibitor. This is Venom peptide CtAPI from Chaerilus tricostatus (Scorpion).